The primary structure comprises 367 residues: Phosphoribosylaminoimidazole-succinocarboxamide synthase (367 aa).

Belongs to the SAICAR synthetase family.

It carries out the reaction 5-amino-1-(5-phospho-D-ribosyl)imidazole-4-carboxylate + L-aspartate + ATP = (2S)-2-[5-amino-1-(5-phospho-beta-D-ribosyl)imidazole-4-carboxamido]succinate + ADP + phosphate + 2 H(+). It functions in the pathway purine metabolism; IMP biosynthesis via de novo pathway; 5-amino-1-(5-phospho-D-ribosyl)imidazole-4-carboxamide from 5-amino-1-(5-phospho-D-ribosyl)imidazole-4-carboxylate: step 1/2. In Psychromonas ingrahamii (strain DSM 17664 / CCUG 51855 / 37), this protein is Phosphoribosylaminoimidazole-succinocarboxamide synthase.